We begin with the raw amino-acid sequence, 192 residues long: Riboflavin kinase (192 aa).

Residues threonine 47 and asparagine 49 each contribute to the Mg(2+) site. Glutamate 129 functions as the Nucleophile in the catalytic mechanism.

This sequence belongs to the flavokinase family. The cofactor is Zn(2+). Mg(2+) serves as cofactor.

It carries out the reaction riboflavin + ATP = FMN + ADP + H(+). It participates in cofactor biosynthesis; FMN biosynthesis; FMN from riboflavin (ATP route): step 1/1. In terms of biological role, catalyzes the phosphorylation of riboflavin (vitamin B2) to form flavin mononucleotide (FMN) coenzyme. This is Riboflavin kinase (FMN1) from Yarrowia lipolytica (strain CLIB 122 / E 150) (Yeast).